Reading from the N-terminus, the 112-residue chain is uncharacterized protein (112 aa).

The protein localises to the plastid. The protein resides in the chloroplast. This is an uncharacterized protein from Chlamydomonas reinhardtii (Chlamydomonas smithii).